We begin with the raw amino-acid sequence, 612 residues long: Transcription factor unc-37 (612 aa).

The disordered stretch occupies residues 143–228; it reads FASPHVNGGD…SNSRARQQQQ (86 aa). Residues 150 to 159 are compositionally biased toward gly residues; that stretch reads GGDGAGGSSG. The interval 153–196 is CCN domain; sequence GAGGSSGGASEAKKAKLEDPDDGELEIDVTNDDHPSTASNGGAA. Positions 171-182 are enriched in acidic residues; sequence DPDDGELEIDVT. A compositionally biased stretch (polar residues) spans 202 to 221; it reads DSTNSVASSGASTPSIASNS. WD repeat units lie at residues 308 to 339, 372 to 402, 414 to 444, 456 to 486, 538 to 568, and 579 to 609; these read GIPT…RVYT, LKEN…ALWD, TDSQ…LIYD, GHQD…RCWD, QHES…NAWR, and KENS…TLYA.

This sequence belongs to the WD repeat Groucho/TLE family. Interacts with unc-4. Interacts with ref-1. May interact with mls-1.

It is found in the nucleus. Transcriptional corepressor that functions with the neural specificity gene unc-4 to govern motor neuron identity. In concert with unc-4, represses the expression of VB-specific genes such as ceh-12, thereby preventing the adoption of VB motor neuron fate. May function with transcription factor mls-1 to promote uterine muscle specification and formation. This is Transcription factor unc-37 (unc-37) from Caenorhabditis elegans.